The primary structure comprises 312 residues: MWPNITAAPFLLTGFPGLEAAHHWISIPFFAVYVCILLGNGMLLYLIKHDHSLHEPMYYFLTMLAGTDLMVTLTTMPTVMGILWVNHREISSVGCFLQAYFIHSLSVVESGSLLAMAYDCFIAIRNPLRYASILTNTRVIALGVGVFLRGFVSILPVILRLFSFSYCKSHVITRAFCLHQEIMRLACADITFNRLYPVILISLTIFLDCLIILFSYILILNTVIGIASGEERAKALNTCISHISCVLIFYVTVMGLTFIYRFGKNVPEVVHIIMSYIYFLFPPLMNPVIYSIKTKQIQYGIIRLLSKHRFSS.

Residues 1-23 lie on the Extracellular side of the membrane; that stretch reads MWPNITAAPFLLTGFPGLEAAHH. A glycan (N-linked (GlcNAc...) asparagine) is linked at asparagine 4. A helical transmembrane segment spans residues 24–44; it reads WISIPFFAVYVCILLGNGMLL. Over 45–52 the chain is Cytoplasmic; that stretch reads YLIKHDHS. Residues 53–73 form a helical membrane-spanning segment; it reads LHEPMYYFLTMLAGTDLMVTL. At 74–97 the chain is on the extracellular side; that stretch reads TTMPTVMGILWVNHREISSVGCFL. A disulfide bond links cysteine 95 and cysteine 187. Residues 98–118 form a helical membrane-spanning segment; the sequence is QAYFIHSLSVVESGSLLAMAY. Residues 119-137 lie on the Cytoplasmic side of the membrane; the sequence is DCFIAIRNPLRYASILTNT. A helical membrane pass occupies residues 138-158; it reads RVIALGVGVFLRGFVSILPVI. Residues 159 to 194 lie on the Extracellular side of the membrane; the sequence is LRLFSFSYCKSHVITRAFCLHQEIMRLACADITFNR. A helical membrane pass occupies residues 195 to 215; that stretch reads LYPVILISLTIFLDCLIILFS. The Cytoplasmic segment spans residues 216 to 235; sequence YILILNTVIGIASGEERAKA. The chain crosses the membrane as a helical span at residues 236–256; it reads LNTCISHISCVLIFYVTVMGL. Residues 257 to 271 lie on the Extracellular side of the membrane; that stretch reads TFIYRFGKNVPEVVH. A helical transmembrane segment spans residues 272-292; the sequence is IIMSYIYFLFPPLMNPVIYSI. Residues 293-312 lie on the Cytoplasmic side of the membrane; sequence KTKQIQYGIIRLLSKHRFSS.

It belongs to the G-protein coupled receptor 1 family. In terms of processing, ubiquitinated by the CRL2(FEM1A) and CRL2(FEM1C) complexes, which recognize the -Lys-Xaa-Xaa-Arg C-degron at the C-terminus, leading to its degradation.

It localises to the cell membrane. In terms of biological role, odorant receptor. The chain is Olfactory receptor 51B2 (OR51B2) from Homo sapiens (Human).